The primary structure comprises 693 residues: Elongation factor G (693 aa).

The tr-type G domain occupies 8 to 282; it reads EKTRNIGIMA…AVIDYLPSPL (275 aa). GTP contacts are provided by residues 17–24, 81–85, and 135–138; these read AHIDAGKT, DTPGH, and NKMD.

The protein belongs to the TRAFAC class translation factor GTPase superfamily. Classic translation factor GTPase family. EF-G/EF-2 subfamily.

The protein resides in the cytoplasm. Functionally, catalyzes the GTP-dependent ribosomal translocation step during translation elongation. During this step, the ribosome changes from the pre-translocational (PRE) to the post-translocational (POST) state as the newly formed A-site-bound peptidyl-tRNA and P-site-bound deacylated tRNA move to the P and E sites, respectively. Catalyzes the coordinated movement of the two tRNA molecules, the mRNA and conformational changes in the ribosome. The polypeptide is Elongation factor G (Staphylococcus aureus (strain Newman)).